We begin with the raw amino-acid sequence, 877 residues long: GPI inositol-deacylase (877 aa).

The helical transmembrane segment at 35-55 (FLSRLFCALAVLFSYSIYQSF) threads the bilayer. Ser206 is a catalytic residue. N-linked (GlcNAc...) asparagine glycans are attached at residues Asn291, Asn336, Asn374, Asn448, and Asn473. The next 8 membrane-spanning stretches (helical) occupy residues 597 to 617 (VLAWPVGWATVVLLFQLSDFI), 637 to 657 (MPICIVLLLLGATIQSQLPDF), 674 to 694 (PLVGILGVWTFGLLCVVSFVI), 735 to 755 (VLVNQVIPHQLIFLLCVILLW), 771 to 791 (ISTCAIFTTLLIPFKILHVAI), 809 to 829 (NFYYAIPPVLLVKCASCGGTI), 834 to 854 (VCLKACRIALIILIMSSFSVG), and 857 to 877 (WTWILSPIANAVLILFVASII).

Belongs to the GPI inositol-deacylase family.

Its subcellular location is the endoplasmic reticulum membrane. Functionally, involved in inositol deacylation of GPI-anchored proteins which plays important roles in the quality control and ER-associated degradation of GPI-anchored proteins. This chain is GPI inositol-deacylase (BST1), found in Cryptococcus neoformans var. neoformans serotype D (strain JEC21 / ATCC MYA-565) (Filobasidiella neoformans).